The following is a 169-amino-acid chain: Succinate dehydrogenase cytochrome b560 subunit, mitochondrial (169 aa).

The N-terminal 29 residues, 1 to 29 (MAALLLRHVGRHCLRAHFSPQLCIRNAVP), are a transit peptide targeting the mitochondrion. The Mitochondrial matrix portion of the chain corresponds to 30 to 65 (LGTTAKEEMERFWNKNIGSNRPLSPHITIYSWSLPM). The helical transmembrane segment at 66 to 90 (AMSICHRGTGIALSAGVSLFGMSAL) threads the bilayer. Residues 91–110 (LLPGNFESYLELVKSLCLGP) lie on the Mitochondrial intermembrane side of the membrane. Residues 111 to 139 (ALIHTAKFALVFPLMYHTWNGIRHLMWDL) form a helical membrane-spanning segment. Histidine 127 provides a ligand contact to heme b. Over 140–146 (GKGLKIP) the chain is Mitochondrial matrix. Residues 147-167 (QLYQSGVVVLVLTVLSSMGLA) traverse the membrane as a helical segment. The Mitochondrial intermembrane portion of the chain corresponds to 168–169 (AM).

The protein belongs to the cytochrome b560 family. As to quaternary structure, component of complex II composed of four subunits: the flavoprotein (FP) SDHA, iron-sulfur protein (IP) SDHB, and a cytochrome b560 composed of SDHC and SDHD. Requires heme b as cofactor.

It localises to the mitochondrion inner membrane. The protein operates within carbohydrate metabolism; tricarboxylic acid cycle. Functionally, membrane-anchoring subunit of succinate dehydrogenase (SDH) that is involved in complex II of the mitochondrial electron transport chain and is responsible for transferring electrons from succinate to ubiquinone (coenzyme Q). SDH also oxidizes malate to the non-canonical enol form of oxaloacetate, enol-oxaloacetate. Enol-oxaloacetate, which is a potent inhibitor of the succinate dehydrogenase activity, is further isomerized into keto-oxaloacetate. The polypeptide is Succinate dehydrogenase cytochrome b560 subunit, mitochondrial (SDHC) (Homo sapiens (Human)).